A 445-amino-acid polypeptide reads, in one-letter code: Phosphoglucosamine mutase (445 aa).

Ser-102 functions as the Phosphoserine intermediate in the catalytic mechanism. Positions 102, 241, 243, and 245 each coordinate Mg(2+). Ser-102 is modified (phosphoserine).

Belongs to the phosphohexose mutase family. Requires Mg(2+) as cofactor. In terms of processing, activated by phosphorylation.

It catalyses the reaction alpha-D-glucosamine 1-phosphate = D-glucosamine 6-phosphate. In terms of biological role, catalyzes the conversion of glucosamine-6-phosphate to glucosamine-1-phosphate. The sequence is that of Phosphoglucosamine mutase from Acinetobacter baumannii (strain AB0057).